Reading from the N-terminus, the 246-residue chain is Probable transcriptional regulatory protein YebC (246 aa).

The segment at 1–20 (MAGHSKWANTRHRKAAQDAK) is disordered.

This sequence belongs to the TACO1 family.

It is found in the cytoplasm. The sequence is that of Probable transcriptional regulatory protein YebC from Shigella boydii serotype 4 (strain Sb227).